Consider the following 325-residue polypeptide: Probable transcription factor At4g01260 (325 aa).

The segment at 1–98 (MAPKQLKKIE…SMGEEDVKKK (98 aa)) is disordered. Composition is skewed to low complexity over residues 23–32 (ASSGESATSG) and 49–69 (KPVV…ESST). The segment covering 73 to 83 (RSFEKTDEMSK) has biased composition (basic and acidic residues).

It belongs to the GeBP family.

The chain is Probable transcription factor At4g01260 from Arabidopsis thaliana (Mouse-ear cress).